Here is a 183-residue protein sequence, read N- to C-terminus: Holliday junction branch migration complex subunit RuvA (183 aa).

The interval 1–63 (MIVGLIGVVE…EDANLLYGFL (63 aa)) is domain I. The segment at 64-139 (EESEKILFER…FFIQDENRPA (76 aa)) is domain II. Ala139 is a region of interest (flexible linker). The tract at residues 139-183 (ARNEVFLALESLGFKSAEINKVLKTLKPNLSIEAAIKEALQQLRS) is domain III.

Belongs to the RuvA family. In terms of assembly, homotetramer. Forms an RuvA(8)-RuvB(12)-Holliday junction (HJ) complex. HJ DNA is sandwiched between 2 RuvA tetramers; dsDNA enters through RuvA and exits via RuvB. An RuvB hexamer assembles on each DNA strand where it exits the tetramer. Each RuvB hexamer is contacted by two RuvA subunits (via domain III) on 2 adjacent RuvB subunits; this complex drives branch migration. In the full resolvosome a probable DNA-RuvA(4)-RuvB(12)-RuvC(2) complex forms which resolves the HJ.

Its subcellular location is the cytoplasm. Its function is as follows. The RuvA-RuvB-RuvC complex processes Holliday junction (HJ) DNA during genetic recombination and DNA repair, while the RuvA-RuvB complex plays an important role in the rescue of blocked DNA replication forks via replication fork reversal (RFR). RuvA specifically binds to HJ cruciform DNA, conferring on it an open structure. The RuvB hexamer acts as an ATP-dependent pump, pulling dsDNA into and through the RuvAB complex. HJ branch migration allows RuvC to scan DNA until it finds its consensus sequence, where it cleaves and resolves the cruciform DNA. In Helicobacter pylori (strain HPAG1), this protein is Holliday junction branch migration complex subunit RuvA.